The primary structure comprises 42 residues: Gastric inhibitory polypeptide (42 aa).

The protein belongs to the glucagon family.

It localises to the secreted. Potent stimulator of insulin secretion and relatively poor inhibitor of gastric acid secretion. In Sus scrofa (Pig), this protein is Gastric inhibitory polypeptide (GIP).